The primary structure comprises 327 residues: Ribose-phosphate pyrophosphokinase (327 aa).

ATP is bound by residues 40–42 and 99–100; these read DGE and RQ. 2 residues coordinate Mg(2+): H134 and D173. Residue K196 is part of the active site. Residues R198, D222, and 226–230 contribute to the D-ribose 5-phosphate site; that span reads DTANT.

Belongs to the ribose-phosphate pyrophosphokinase family. Class I subfamily. Homohexamer. Requires Mg(2+) as cofactor.

Its subcellular location is the cytoplasm. The enzyme catalyses D-ribose 5-phosphate + ATP = 5-phospho-alpha-D-ribose 1-diphosphate + AMP + H(+). It participates in metabolic intermediate biosynthesis; 5-phospho-alpha-D-ribose 1-diphosphate biosynthesis; 5-phospho-alpha-D-ribose 1-diphosphate from D-ribose 5-phosphate (route I): step 1/1. Its function is as follows. Involved in the biosynthesis of the central metabolite phospho-alpha-D-ribosyl-1-pyrophosphate (PRPP) via the transfer of pyrophosphoryl group from ATP to 1-hydroxyl of ribose-5-phosphate (Rib-5-P). This Neisseria meningitidis serogroup A / serotype 4A (strain DSM 15465 / Z2491) protein is Ribose-phosphate pyrophosphokinase.